The primary structure comprises 775 residues: Zinc finger protein GLIS3 (775 aa).

Disordered stretches follow at residues 121 to 147 (TESS…KKRA) and 282 to 314 (PGST…AHLH). Low complexity predominate over residues 123 to 133 (SSHSPYPSPRH). Basic residues predominate over residues 134–147 (SSTRSHSARSKKRA). Positions 289–307 (PPAPPLPPLPPPPGPPPPY) are enriched in pro residues. Residues 345–370 (HCCRWIDCSALYDQQEELVRHIEKVH) form a C2H2-type 1 zinc finger. The C2H2-type 2; atypical zinc finger occupies 379–406 (FTCFWAGCPRRYKPFNARYKLLIHMRVH). C2H2-type zinc fingers lie at residues 412 to 436 (NKCT…LRSH), 442 to 466 (YLCQ…QRTH), and 472 to 496 (YACQ…VKAH). 2 disordered regions span residues 485–512 (DPSS…SSTE) and 529–665 (PATS…QPNG). The short motif at 491–507 (KHVKAHSSKEQQARKKL) is the Bipartite nuclear localization signal element. Residues 497 to 512 (SSKEQQARKKLRSSTE) show a composition bias toward basic and acidic residues. 3 stretches are compositionally biased toward polar residues: residues 557–567 (IFSSNYSSRSG), 588–600 (VQGS…SQLP), and 632–663 (SILQ…SFQP).

It belongs to the GLI C2H2-type zinc-finger protein family. In the adult, expressed at high levels in the kidney and at lower levels in the brain, skeletal muscle, pancreas, liver, lung, thymus and ovary.

The protein resides in the nucleus. Acts both as a repressor and an activator of transcription. Binds to the consensus sequence 5'-GACCACCCAC-3'. In Homo sapiens (Human), this protein is Zinc finger protein GLIS3 (GLIS3).